A 404-amino-acid polypeptide reads, in one-letter code: Ethanolamine-phosphate cytidylyltransferase (404 aa).

The interval Tyr173–Gly201 is disordered. Polar residues predominate over residues Thr189 to Gly201. CTP is bound by residues Ala239–Phe240, His247–Phe250, Lys277, His325–Thr328, and Ser354–Leu358. Ser356 carries the post-translational modification Phosphoserine. 2 positions are modified to phosphothreonine: Thr359 and Thr360.

Belongs to the cytidylyltransferase family.

The enzyme catalyses phosphoethanolamine + CTP + H(+) = CDP-ethanolamine + diphosphate. It participates in phospholipid metabolism; phosphatidylethanolamine biosynthesis; phosphatidylethanolamine from ethanolamine: step 2/3. Its function is as follows. Ethanolamine-phosphate cytidylyltransferase that catalyzes the second step in the synthesis of phosphatidylethanolamine (PE) from ethanolamine via the CDP-ethanolamine pathway. Phosphatidylethanolamine is a dominant inner-leaflet phospholipid in cell membranes, where it plays a role in membrane function by structurally stabilizing membrane-anchored proteins, and participates in important cellular processes such as cell division, cell fusion, blood coagulation, and apoptosis. The chain is Ethanolamine-phosphate cytidylyltransferase (Pcyt2) from Mus musculus (Mouse).